The chain runs to 169 residues: Shikimate kinase (169 aa).

13-18 lines the ATP pocket; the sequence is GAGKST. Mg(2+) is bound at residue Ser17. Asp35, Arg59, and Gly80 together coordinate substrate. Residue Arg117 coordinates ATP. Residue Arg136 participates in substrate binding. Arg153 lines the ATP pocket.

The protein belongs to the shikimate kinase family. As to quaternary structure, monomer. Mg(2+) serves as cofactor.

Its subcellular location is the cytoplasm. It carries out the reaction shikimate + ATP = 3-phosphoshikimate + ADP + H(+). Its pathway is metabolic intermediate biosynthesis; chorismate biosynthesis; chorismate from D-erythrose 4-phosphate and phosphoenolpyruvate: step 5/7. Catalyzes the specific phosphorylation of the 3-hydroxyl group of shikimic acid using ATP as a cosubstrate. The sequence is that of Shikimate kinase from Corynebacterium efficiens (strain DSM 44549 / YS-314 / AJ 12310 / JCM 11189 / NBRC 100395).